We begin with the raw amino-acid sequence, 85 residues long: Cell division topological specificity factor (85 aa).

The protein belongs to the MinE family.

Prevents the cell division inhibition by proteins MinC and MinD at internal division sites while permitting inhibition at polar sites. This ensures cell division at the proper site by restricting the formation of a division septum at the midpoint of the long axis of the cell. The protein is Cell division topological specificity factor of Chromobacterium violaceum (strain ATCC 12472 / DSM 30191 / JCM 1249 / CCUG 213 / NBRC 12614 / NCIMB 9131 / NCTC 9757 / MK).